The primary structure comprises 88 residues: MKAGIHPEYREVLFHDVSNDFKFITRSTINTREKIEFEGTEYPLVKIEVSSESHPFYTGKHKIVDTAGRVDKFRKKFGTVGSKTQMAE.

It belongs to the bacterial ribosomal protein bL31 family. Type B subfamily. In terms of assembly, part of the 50S ribosomal subunit.

The polypeptide is Large ribosomal subunit protein bL31B (Herminiimonas arsenicoxydans).